The sequence spans 502 residues: Cytochrome P450 71B16 (502 aa).

A helical transmembrane segment spans residues 1-21 (MAISLLCLFLITLVSLIFVVK). Cys-444 contributes to the heme binding site.

It belongs to the cytochrome P450 family. The cofactor is heme.

The protein localises to the membrane. The protein is Cytochrome P450 71B16 (CYP71B16) of Arabidopsis thaliana (Mouse-ear cress).